A 73-amino-acid chain; its full sequence is Metallothionein-like protein type 2 (73 aa).

This sequence belongs to the metallothionein superfamily. Type 15 family.

Metallothioneins have a high content of cysteine residues that bind various heavy metals. This chain is Metallothionein-like protein type 2, found in Solanum lycopersicum (Tomato).